An 862-amino-acid chain; its full sequence is Short transient receptor potential channel 7 (862 aa).

The disordered stretch occupies residues 1 to 21 (MLRNSTFKNMQRRHTTLREKG). The Cytoplasmic segment spans residues 1–351 (MLRNSTFKNM…GLRQQSIAVK (351 aa)). Over residues 10–21 (MQRRHTTLREKG) the composition is skewed to basic residues. Position 15 is a phosphothreonine; by PKG/PRKG1 (threonine 15). 4 ANK repeats span residues 42 to 71 (PEEERFLDSAEYGNIPVVRKMLEESKTLNF), 77 to 106 (MGQNALQLAVGNEHLEVTELLLKKENLARV), 108 to 134 (DALLLAISKGYVRIVEAILNHPAFAQG), and 163 to 192 (HDITPIILAAHCQEYEIVHILLLKGARIER). A helical membrane pass occupies residues 352–372 (FLAVFGVSIGLPFLAIAYWIA). Over 373-383 (PCSKLGRTLRS) the chain is Extracellular. Residues 384–404 (PFMKFVAHAVSFTIFLGLLVV) form a helical membrane-spanning segment. Topologically, residues 405–465 (NASDRFEGVK…KEIWEEGPRE (61 aa)) are cytoplasmic. Residues 466–486 (YVLHLWNLLDFGMLSIFVASF) traverse the membrane as a helical segment. At 487–537 (TARFMAFLKATEAQLYVDQHVQDDTLHNVSLPPEVAYFTYARDKWWPSDPQ) the chain is on the extracellular side. Asparagine 514 carries an N-linked (GlcNAc...) asparagine glycan. Residues 538-558 (IISEGLYAIAVVLSFSRIAYI) form a helical membrane-spanning segment. The Cytoplasmic portion of the chain corresponds to 559–581 (LPANESFGPLQISLGRTVKDIFK). A helical membrane pass occupies residues 582-602 (FMVIFIMVFVAFMIGMFNLYS). Residues 603 to 651 (YYRGAKYNPAFTTVEESFKTLFWSIFGLSEVISVVLKYDHKFIENIGYV) are Extracellular-facing. A helical transmembrane segment spans residues 652–672 (LYGVYNVTMVVVLLNMLIAMI). The Cytoplasmic portion of the chain corresponds to 673-862 (NNSYQEIEED…HLRVNKGKDI (190 aa)).

Belongs to the transient receptor (TC 1.A.4) family. STrpC subfamily. TRPC7 sub-subfamily. In terms of assembly, interacts with MX1 and RNF24. Interacts (via ANK-repeat domains) with PRKG1. Post-translationally, phosphorylation by PRKG1 at Thr-15 negatively regulates TRPC7 activity.

The protein localises to the cell membrane. The protein resides in the nucleus envelope. The enzyme catalyses Ca(2+)(in) = Ca(2+)(out). Forms a receptor-activated non-selective calcium permeant cation channel. Probably is operated by a phosphatidylinositol second messenger system activated by receptor tyrosine kinases or G-protein coupled receptors. Activated by diacylglycerol (DAG). May also be activated by intracellular calcium store depletion. This is Short transient receptor potential channel 7 (TRPC7) from Homo sapiens (Human).